The following is a 368-amino-acid chain: MTVLIVEDDDITREAMGQYLKLSGFNVIEAENGEKAVELSENVDVALVDVMLPGMSGIEVVNKIKAKNPSCVVFVVTAYDDTEIVKKCVEAGADDFIKKPVNLELLRLKITHALRNRVFHMYRNSYLKSLKKKLFLLEKTAEEFFTEYEDFLFEVLEILNMLSEYRDMETHRHTERVGWLSGRIAEEMGMSEVFVTEIQFAAPLHDIGKIGIPDRILLKPGILTPEEFEIMKQHTTIGFRILSRSNSPILQLGAEIALTHHERWDGSGYPRGLKEREIPISGLIVAVADSFDAMVSRRPYKNPKPLEEAFREIESLSGKLYSPEVVEAFLKLEKEITDVYRREKDEDTSHNGGRSHQSSPGEGVEGIR.

In terms of domain architecture, Response regulatory spans Thr-2–Leu-114. The residue at position 49 (Asp-49) is a 4-aspartylphosphate. Residues Tyr-148 to Asp-345 enclose the HD-GYP domain. 8 residues coordinate a divalent metal cation: Glu-169, His-173, His-205, Asp-206, His-234, His-260, His-261, and Asp-289. Positions Arg-341–Arg-368 are disordered. Over residues His-350–Pro-360 the composition is skewed to polar residues.

It carries out the reaction 3',3'-c-di-GMP + 2 H2O = 2 GMP + 2 H(+). Its activity is regulated as follows. Can function in vivo with either divalent iron or manganese occupying di- and trimetal sites. Dimetal is necessary and sufficient to catalyze conversion of c-di-GMP to pGpG, but conversion of pGpG to GMP requires an occupied trimetal site. Phosphodiesterase (PDE) that catalyzes the hydrolysis of cyclic diguanylate (c-di-GMP) to GMP. Hydrolyzes c-di-GMP to GMP in a two-step reaction, via the linear intermediate 5'-phosphoguanylyl(3'-&gt;5')guanosine (pGpG). The chain is Cyclic di-GMP phosphodiesterase TM_0186 from Thermotoga maritima (strain ATCC 43589 / DSM 3109 / JCM 10099 / NBRC 100826 / MSB8).